Here is a 357-residue protein sequence, read N- to C-terminus: Peptide chain release factor 1 (357 aa).

At glutamine 236 the chain carries N5-methylglutamine.

Belongs to the prokaryotic/mitochondrial release factor family. Post-translationally, methylated by PrmC. Methylation increases the termination efficiency of RF1.

The protein localises to the cytoplasm. Peptide chain release factor 1 directs the termination of translation in response to the peptide chain termination codons UAG and UAA. This is Peptide chain release factor 1 (prfA) from Mycobacterium bovis (strain ATCC BAA-935 / AF2122/97).